The following is a 515-amino-acid chain: Cytochrome P450 2D7 (515 aa).

Topologically, residues 1 to 2 (MG) are extracellular. Residues 3-23 (LEALVPLAMIVAIFLLLVDLM) traverse the membrane as a helical segment. The Cytoplasmic segment spans residues 24 to 301 (HRHQRWAARY…DENLRIVVGN (278 aa)). A helical transmembrane segment spans residues 302–322 (LFLAGMVTTSTTLAWGLLLMI). Residues 323–515 (LHLDVQRGRR…SPYELCAVPR (193 aa)) lie on the Extracellular side of the membrane. A glycan (N-linked (GlcNAc...) asparagine) is linked at Asn416. Position 461 (Cys461) interacts with heme.

This sequence belongs to the cytochrome P450 family. Requires heme as cofactor. Expressed in brain cortex (at protein level).

It is found in the membrane. It localises to the cytoplasm. The protein localises to the mitochondrion. It carries out the reaction an organic molecule + reduced [NADPH--hemoprotein reductase] + O2 = an alcohol + oxidized [NADPH--hemoprotein reductase] + H2O + H(+). Its function is as follows. May be responsible for the metabolism of many drugs and environmental chemicals that it oxidizes. It may be involved in the metabolism of codeine to morphine. However, another study could not confirm it. This chain is Cytochrome P450 2D7, found in Homo sapiens (Human).